The chain runs to 990 residues: Insulin-degrading enzyme (990 aa).

His-81 is a Zn(2+) binding site. The active-site Proton acceptor is the Glu-84. Zn(2+) is bound by residues His-85 and Glu-162.

It belongs to the peptidase M16 family. Zn(2+) is required as a cofactor.

The catalysed reaction is Degradation of insulin, glucagon and other polypeptides. No action on proteins.. In terms of biological role, can cleave insulin and TGF-alpha. This is Insulin-degrading enzyme (Ide) from Drosophila melanogaster (Fruit fly).